The following is a 375-amino-acid chain: Carbamoyl phosphate synthase small chain (375 aa).

The segment at 1–186 is CPSase; that stretch reads MKAILALEDG…IVDGTYAWPG (186 aa). Residues Ser-45, Gly-238, and Gly-240 each coordinate L-glutamine. Positions 190–375 constitute a Glutamine amidotransferase type-1 domain; the sequence is RLVVFDMGIK…RNLVRKETGK (186 aa). Cys-265 acts as the Nucleophile in catalysis. Positions 266, 269, 307, 309, and 310 each coordinate L-glutamine. Residues His-348 and Glu-350 contribute to the active site.

This sequence belongs to the CarA family. Composed of two chains; the small (or glutamine) chain promotes the hydrolysis of glutamine to ammonia, which is used by the large (or ammonia) chain to synthesize carbamoyl phosphate. Tetramer of heterodimers (alpha,beta)4.

It carries out the reaction hydrogencarbonate + L-glutamine + 2 ATP + H2O = carbamoyl phosphate + L-glutamate + 2 ADP + phosphate + 2 H(+). It catalyses the reaction L-glutamine + H2O = L-glutamate + NH4(+). Its pathway is amino-acid biosynthesis; L-arginine biosynthesis; carbamoyl phosphate from bicarbonate: step 1/1. It functions in the pathway pyrimidine metabolism; UMP biosynthesis via de novo pathway; (S)-dihydroorotate from bicarbonate: step 1/3. In terms of biological role, small subunit of the glutamine-dependent carbamoyl phosphate synthetase (CPSase). CPSase catalyzes the formation of carbamoyl phosphate from the ammonia moiety of glutamine, carbonate, and phosphate donated by ATP, constituting the first step of 2 biosynthetic pathways, one leading to arginine and/or urea and the other to pyrimidine nucleotides. The small subunit (glutamine amidotransferase) binds and cleaves glutamine to supply the large subunit with the substrate ammonia. The sequence is that of Carbamoyl phosphate synthase small chain from Solidesulfovibrio magneticus (strain ATCC 700980 / DSM 13731 / RS-1) (Desulfovibrio magneticus).